Reading from the N-terminus, the 248-residue chain is 3-oxoacyl-[acyl-carrier-protein] reductase FabG (248 aa).

NADP(+) contacts are provided by residues 14 to 17 (GGSR), 65 to 66 (DV), and Asn92. Position 144 (Ser144) interacts with substrate. Catalysis depends on Tyr157, which acts as the Proton acceptor. NADP(+) is bound by residues 157–161 (YAAAK) and Ile190.

This sequence belongs to the short-chain dehydrogenases/reductases (SDR) family. Homotetramer.

The enzyme catalyses a (3R)-hydroxyacyl-[ACP] + NADP(+) = a 3-oxoacyl-[ACP] + NADPH + H(+). It participates in lipid metabolism; fatty acid biosynthesis. Catalyzes the NADPH-dependent reduction of beta-ketoacyl-ACP substrates to beta-hydroxyacyl-ACP products, the first reductive step in the elongation cycle of fatty acid biosynthesis. The polypeptide is 3-oxoacyl-[acyl-carrier-protein] reductase FabG (fabG) (Chlamydia muridarum (strain MoPn / Nigg)).